Reading from the N-terminus, the 455-residue chain is Bifunctional protein GlmU (455 aa).

The pyrophosphorylase stretch occupies residues 1–226; the sequence is MSLEIVILAA…PMEVQGANDR (226 aa). Residues 8–11, Lys-22, Gln-73, 78–79, 99–101, Gly-136, Glu-151, Asn-166, and Asn-224 contribute to the UDP-N-acetyl-alpha-D-glucosamine site; these read LAAG, GT, and YGD. Asp-101 provides a ligand contact to Mg(2+). Asn-224 is a Mg(2+) binding site. The linker stretch occupies residues 227-247; the sequence is KQLSELERHYQLRAGRRLMAQ. An N-acetyltransferase region spans residues 248–455; the sequence is GVTLRDPARF…WKRPEKIKKN (208 aa). Residues Arg-330 and Lys-348 each coordinate UDP-N-acetyl-alpha-D-glucosamine. Residue His-360 is the Proton acceptor of the active site. UDP-N-acetyl-alpha-D-glucosamine contacts are provided by Tyr-363 and Asn-374. Acetyl-CoA-binding positions include Ala-377, 383–384, Ser-402, Ala-420, and Arg-437; that span reads NY.

The protein in the N-terminal section; belongs to the N-acetylglucosamine-1-phosphate uridyltransferase family. This sequence in the C-terminal section; belongs to the transferase hexapeptide repeat family. As to quaternary structure, homotrimer. It depends on Mg(2+) as a cofactor.

It localises to the cytoplasm. It carries out the reaction alpha-D-glucosamine 1-phosphate + acetyl-CoA = N-acetyl-alpha-D-glucosamine 1-phosphate + CoA + H(+). The enzyme catalyses N-acetyl-alpha-D-glucosamine 1-phosphate + UTP + H(+) = UDP-N-acetyl-alpha-D-glucosamine + diphosphate. The protein operates within nucleotide-sugar biosynthesis; UDP-N-acetyl-alpha-D-glucosamine biosynthesis; N-acetyl-alpha-D-glucosamine 1-phosphate from alpha-D-glucosamine 6-phosphate (route II): step 2/2. Its pathway is nucleotide-sugar biosynthesis; UDP-N-acetyl-alpha-D-glucosamine biosynthesis; UDP-N-acetyl-alpha-D-glucosamine from N-acetyl-alpha-D-glucosamine 1-phosphate: step 1/1. It participates in bacterial outer membrane biogenesis; LPS lipid A biosynthesis. Functionally, catalyzes the last two sequential reactions in the de novo biosynthetic pathway for UDP-N-acetylglucosamine (UDP-GlcNAc). The C-terminal domain catalyzes the transfer of acetyl group from acetyl coenzyme A to glucosamine-1-phosphate (GlcN-1-P) to produce N-acetylglucosamine-1-phosphate (GlcNAc-1-P), which is converted into UDP-GlcNAc by the transfer of uridine 5-monophosphate (from uridine 5-triphosphate), a reaction catalyzed by the N-terminal domain. This Pseudomonas fluorescens (strain Pf0-1) protein is Bifunctional protein GlmU.